The primary structure comprises 96 residues: Small ribosomal subunit protein bS6 (96 aa).

The protein belongs to the bacterial ribosomal protein bS6 family.

Functionally, binds together with bS18 to 16S ribosomal RNA. The polypeptide is Small ribosomal subunit protein bS6 (Streptococcus pneumoniae serotype 2 (strain D39 / NCTC 7466)).